The sequence spans 223 residues: Probable GTP-binding protein EngB (223 aa).

One can recognise an EngB-type G domain in the interval 49 to 223 (MGVEIAFAGR…LRAALAGLTD (175 aa)). GTP-binding positions include 57 to 64 (GRSNVGKS), 84 to 88 (GRTKQ), 102 to 105 (DMPG), 169 to 172 (TKAD), and 203 to 205 (TSS). Mg(2+)-binding residues include Ser64 and Thr86.

The protein belongs to the TRAFAC class TrmE-Era-EngA-EngB-Septin-like GTPase superfamily. EngB GTPase family. The cofactor is Mg(2+).

Necessary for normal cell division and for the maintenance of normal septation. The protein is Probable GTP-binding protein EngB of Granulibacter bethesdensis (strain ATCC BAA-1260 / CGDNIH1).